The chain runs to 415 residues: Phosphoglycerate kinase (415 aa).

Substrate contacts are provided by residues 24–26 (DLN), Arg-43, 66–69 (HLGR), Arg-125, and Arg-165. ATP contacts are provided by residues Lys-215, Gly-303, Glu-334, and 363 to 366 (GGDS).

The protein belongs to the phosphoglycerate kinase family. Monomer.

It is found in the cytoplasm. It carries out the reaction (2R)-3-phosphoglycerate + ATP = (2R)-3-phospho-glyceroyl phosphate + ADP. The protein operates within carbohydrate degradation; glycolysis; pyruvate from D-glyceraldehyde 3-phosphate: step 2/5. This is Phosphoglycerate kinase from Mycobacterium avium (strain 104).